Here is a 558-residue protein sequence, read N- to C-terminus: 2-isopropylmalate synthase (558 aa).

A Pyruvate carboxyltransferase domain is found at 31-306; the sequence is PIWCAVDLRD…DPGIDFSNID (276 aa). Mg(2+) is bound by residues aspartate 40, histidine 245, histidine 247, and asparagine 281. A regulatory domain region spans residues 440-558; sequence AGSPYSFLEH…LCAANHLSDK (119 aa).

The protein belongs to the alpha-IPM synthase/homocitrate synthase family. LeuA type 2 subfamily. In terms of assembly, homodimer. The cofactor is Mg(2+).

The protein resides in the cytoplasm. It carries out the reaction 3-methyl-2-oxobutanoate + acetyl-CoA + H2O = (2S)-2-isopropylmalate + CoA + H(+). It functions in the pathway amino-acid biosynthesis; L-leucine biosynthesis; L-leucine from 3-methyl-2-oxobutanoate: step 1/4. Catalyzes the condensation of the acetyl group of acetyl-CoA with 3-methyl-2-oxobutanoate (2-ketoisovalerate) to form 3-carboxy-3-hydroxy-4-methylpentanoate (2-isopropylmalate). This chain is 2-isopropylmalate synthase, found in Rhodospirillum rubrum (strain ATCC 11170 / ATH 1.1.1 / DSM 467 / LMG 4362 / NCIMB 8255 / S1).